Consider the following 200-residue polypeptide: Cytochrome c biogenesis ATP-binding export protein CcmA (200 aa).

Positions 2 to 200 (LDVIELDFDY…NKADYEEYHL (199 aa)) constitute an ABC transporter domain. 34–41 (GSNGAGKT) is an ATP binding site.

The protein belongs to the ABC transporter superfamily. CcmA exporter (TC 3.A.1.107) family. The complex is composed of two ATP-binding proteins (CcmA) and two transmembrane proteins (CcmB).

The protein localises to the cell inner membrane. The catalysed reaction is heme b(in) + ATP + H2O = heme b(out) + ADP + phosphate + H(+). In terms of biological role, part of the ABC transporter complex CcmAB involved in the biogenesis of c-type cytochromes; once thought to export heme, this seems not to be the case, but its exact role is uncertain. Responsible for energy coupling to the transport system. This chain is Cytochrome c biogenesis ATP-binding export protein CcmA, found in Legionella pneumophila (strain Paris).